The primary structure comprises 375 residues: Trans-enoyl reductase BOA5 (375 aa).

A compositionally biased stretch (polar residues) spans 1–16; that stretch reads MQAVIQTGPGTLQLTE. Residues 1-21 are disordered; it reads MQAVIQTGPGTLQLTENVPKP. NADP(+) is bound at residue 42 to 45; the sequence is SDWK. 121–128 contacts substrate; that stretch reads VGIVTTGL. The disordered stretch occupies residues 147–168; the sequence is GSAAPQKTRVGPRGWSGGDALT. NADP(+) is bound by residues 185–188, 208–211, Y226, and 273–274; these read STST, SPHN, and LD. 294–298 is a binding site for substrate; sequence ALTIF. Residue 363-364 participates in NADP(+) binding; the sequence is VS.

It belongs to the zinc-containing alcohol dehydrogenase family. In terms of assembly, monomer.

Its pathway is polyketide biosynthesis. Functionally, trans-enoyl reductase; part of the gene cluster A that mediates the biosynthesis of botcinic acid and its botcinin derivatives, acetate-derived polyketides that contribute to virulence when combined with the sesquiterpene botrydial. Botcinic acid and its derivatives have been shown to induce chlorosis and necrosis during host plant infection, but also have antifungal activities. Two polyketide synthases, BOA6 and BOA9, are involved in the biosynthesis of botcinins. BOA6 mediates the formation of the per-methylated tetraketide core by condensation of four units of malonyl-CoA with one unit of acetyl-CoA, which would be methylated in activated methylene groups to yield a bicyclic acid intermediate that could then either be converted to botrylactone derivatives or lose the starter acetate unit through a retro-Claisen type C-C bond cleavage to yield botcinin derivatives. The second polyketide synthase, BOA9, is probably required for the biosynthesis of the tetraketide side chain of botcinins. The methyltransferase (MT) domain within BOA6 is probably responsible for the incorporation of four methyl groups. The trans-enoyl reductase BOA5 might take over the enoyl reductase function of BOA6 that misses an ER domain. The monooxygenases BOA2, BOA3 and BOA4 might be involved in further hydroxylations at C4, C5 and C8, whereas BOA7, close to BOA9, could potentially be involved in the hydroxylation at C4 in the side chain of botcinins. The sequence is that of Trans-enoyl reductase BOA5 from Botryotinia fuckeliana (strain B05.10) (Noble rot fungus).